The chain runs to 841 residues: Translation initiation factor IF-2 (841 aa).

The region spanning 341 to 508 (NRAPVVTIMG…AILLQAEILE (168 aa)) is the tr-type G domain. A G1 region spans residues 350–357 (GHVDHGKT). GTP is bound at residue 350–357 (GHVDHGKT). Residues 375 to 379 (GITQC) form a G2 region. Residues 396–399 (DTPG) are G3. Residues 396–400 (DTPGH) and 450–453 (NKID) each bind GTP. The tract at residues 450 to 453 (NKID) is G4. The interval 486–488 (SAK) is G5.

This sequence belongs to the TRAFAC class translation factor GTPase superfamily. Classic translation factor GTPase family. IF-2 subfamily.

Its subcellular location is the cytoplasm. Functionally, one of the essential components for the initiation of protein synthesis. Protects formylmethionyl-tRNA from spontaneous hydrolysis and promotes its binding to the 30S ribosomal subunits. Also involved in the hydrolysis of GTP during the formation of the 70S ribosomal complex. The polypeptide is Translation initiation factor IF-2 (Wigglesworthia glossinidia brevipalpis).